An 88-amino-acid polypeptide reads, in one-letter code: Large ribosomal subunit protein bL27 (88 aa).

Residues 1–20 form a disordered region; sequence MASKKGVGSTKDGRDSIAKR.

It belongs to the bacterial ribosomal protein bL27 family.

The polypeptide is Large ribosomal subunit protein bL27 (rpmA) (Geobacillus stearothermophilus (Bacillus stearothermophilus)).